The primary structure comprises 449 residues: RNA binding protein fox-1 homolog 2 (449 aa).

A compositionally biased stretch (low complexity) spans 1 to 21; that stretch reads MAEGGQAQQQPPQLGPGAAAR. The interval 1-186 is disordered; the sequence is MAEGGQAQQQ…STPKRLHVSN (186 aa). Polar residues-rich tracts occupy residues 77-86 and 118-138; these read QGNQEPTTTP and YAGQTSEHNLTLYGSTQPHGE. Low complexity predominate over residues 139–176; the sequence is QSSNSPSNQNGSLTQTEGGAQTDGQQSQTQSSENSESK. Residues 180-256 enclose the RRM domain; it reads KRLHVSNIPF…RKIEVNNATA (77 aa). Arg236, Gly241, Tyr268, and Lys273 each carry omega-N-methylarginine. 2 positions are modified to asymmetric dimethylarginine: Glu285 and Pro317. 5 positions are modified to omega-N-methylarginine: Leu318, Leu323, Ala336, Arg340, and Gly341. Asymmetric dimethylarginine is present on residues Arg356 and Arg388. Asymmetric dimethylarginine; alternate occurs at positions 440 and 445. Omega-N-methylarginine; alternate is present on residues Arg440 and Arg445.

As to quaternary structure, interacts with ER-alpha N-terminal activation domain. Interacts with RBPMS; the interaction allows cooperative assembly of stable cell-specific alternative splicing regulatory complexes. As to expression, detected in brain neurons (at protein level). Detected in heart, brain, embryo, lung, liver, kidney and ovary.

It localises to the nucleus. The protein localises to the cytoplasm. In terms of biological role, RNA-binding protein that regulates alternative splicing events by binding to 5'-UGCAUGU-3' elements. Prevents binding of U2AF2 to the 3'-splice site. Regulates alternative splicing of tissue-specific exons and of differentially spliced exons during erythropoiesis. Seems to act as a coregulatory factor of ER-alpha. Together with RNA binding proteins RBPMS and MBNL1/2, activates vascular smooth muscle cells alternative splicing events. The chain is RNA binding protein fox-1 homolog 2 (Rbfox2) from Mus musculus (Mouse).